The primary structure comprises 344 residues: Dihydroorotase (344 aa).

2 residues coordinate Zn(2+): histidine 14 and histidine 16. Substrate is bound by residues histidine 16–arginine 18 and asparagine 42. Zn(2+) contacts are provided by lysine 100, histidine 137, and histidine 175. Lysine 100 carries the N6-carboxylysine modification. Histidine 137 lines the substrate pocket. Leucine 220 contacts substrate. Aspartate 248 contributes to the Zn(2+) binding site. Aspartate 248 is a catalytic residue. Substrate-binding residues include histidine 252 and alanine 264.

It belongs to the metallo-dependent hydrolases superfamily. DHOase family. Class II DHOase subfamily. As to quaternary structure, homodimer. The cofactor is Zn(2+).

The enzyme catalyses (S)-dihydroorotate + H2O = N-carbamoyl-L-aspartate + H(+). It participates in pyrimidine metabolism; UMP biosynthesis via de novo pathway; (S)-dihydroorotate from bicarbonate: step 3/3. In terms of biological role, catalyzes the reversible cyclization of carbamoyl aspartate to dihydroorotate. This Alcanivorax borkumensis (strain ATCC 700651 / DSM 11573 / NCIMB 13689 / SK2) protein is Dihydroorotase.